Consider the following 288-residue polypeptide: 5,10-methylenetetrahydrofolate reductase (288 aa).

Residues A51, H73, G106, D107, A118, Y140, H144, and K159 each coordinate FAD. D107 serves as a coordination point for (6S)-5-methyl-5,6,7,8-tetrahydrofolate. Residue Q175 coordinates (6S)-5-methyl-5,6,7,8-tetrahydrofolate. Residue Q175 coordinates NADH.

The protein belongs to the methylenetetrahydrofolate reductase family. FAD is required as a cofactor.

It catalyses the reaction (6S)-5-methyl-5,6,7,8-tetrahydrofolate + NAD(+) = (6R)-5,10-methylene-5,6,7,8-tetrahydrofolate + NADH + H(+). The protein operates within one-carbon metabolism; tetrahydrofolate interconversion. Its pathway is amino-acid biosynthesis; L-methionine biosynthesis via de novo pathway. In terms of biological role, catalyzes the NADH-dependent reduction of 5,10-methylenetetrahydrofolate to 5-methyltetrahydrofolate. Is required to provide the methyl group necessary for methionine synthetase to convert homocysteine to methionine; the methyl group is given by 5-methyltetrahydrofolate. Is required for Sphingobium SYK-6 to grow on vanillate or syringate as the sole source of carbon. The sequence is that of 5,10-methylenetetrahydrofolate reductase from Sphingobium sp. (strain NBRC 103272 / SYK-6).